Here is a 184-residue protein sequence, read N- to C-terminus: NADH-quinone oxidoreductase subunit B (184 aa).

The [4Fe-4S] cluster site is built by cysteine 37, cysteine 38, cysteine 103, and cysteine 132.

The protein belongs to the complex I 20 kDa subunit family. NDH-1 is composed of 14 different subunits. Subunits NuoB, C, D, E, F, and G constitute the peripheral sector of the complex. [4Fe-4S] cluster serves as cofactor.

The protein resides in the cell membrane. The enzyme catalyses a quinone + NADH + 5 H(+)(in) = a quinol + NAD(+) + 4 H(+)(out). Its function is as follows. NDH-1 shuttles electrons from NADH, via FMN and iron-sulfur (Fe-S) centers, to quinones in the respiratory chain. The immediate electron acceptor for the enzyme in this species is believed to be a menaquinone. Couples the redox reaction to proton translocation (for every two electrons transferred, four hydrogen ions are translocated across the cytoplasmic membrane), and thus conserves the redox energy in a proton gradient. This is NADH-quinone oxidoreductase subunit B from Mycobacteroides abscessus (strain ATCC 19977 / DSM 44196 / CCUG 20993 / CIP 104536 / JCM 13569 / NCTC 13031 / TMC 1543 / L948) (Mycobacterium abscessus).